Consider the following 175-residue polypeptide: Peptide deformylase (175 aa).

Cys-96 and His-138 together coordinate Fe cation. Residue Glu-139 is part of the active site. His-142 is a Fe cation binding site.

It belongs to the polypeptide deformylase family. The cofactor is Fe(2+).

It carries out the reaction N-terminal N-formyl-L-methionyl-[peptide] + H2O = N-terminal L-methionyl-[peptide] + formate. Its function is as follows. Removes the formyl group from the N-terminal Met of newly synthesized proteins. Requires at least a dipeptide for an efficient rate of reaction. N-terminal L-methionine is a prerequisite for activity but the enzyme has broad specificity at other positions. The polypeptide is Peptide deformylase (Helicobacter pylori (strain Shi470)).